Consider the following 331-residue polypeptide: tRNA U34 carboxymethyltransferase (331 aa).

Carboxy-S-adenosyl-L-methionine-binding positions include lysine 91, tryptophan 105, lysine 110, glycine 130, 152 to 154 (DPS), 181 to 182 (IE), methionine 196, tyrosine 200, and arginine 315.

This sequence belongs to the class I-like SAM-binding methyltransferase superfamily. CmoB family. As to quaternary structure, homotetramer.

It catalyses the reaction carboxy-S-adenosyl-L-methionine + 5-hydroxyuridine(34) in tRNA = 5-carboxymethoxyuridine(34) in tRNA + S-adenosyl-L-homocysteine + H(+). Functionally, catalyzes carboxymethyl transfer from carboxy-S-adenosyl-L-methionine (Cx-SAM) to 5-hydroxyuridine (ho5U) to form 5-carboxymethoxyuridine (cmo5U) at position 34 in tRNAs. This is tRNA U34 carboxymethyltransferase from Shewanella baltica (strain OS155 / ATCC BAA-1091).